A 143-amino-acid polypeptide reads, in one-letter code: Transcription antitermination protein NusB (143 aa).

The protein belongs to the NusB family.

In terms of biological role, involved in transcription antitermination. Required for transcription of ribosomal RNA (rRNA) genes. Binds specifically to the boxA antiterminator sequence of the ribosomal RNA (rrn) operons. This chain is Transcription antitermination protein NusB, found in Buchnera aphidicola subsp. Acyrthosiphon pisum (strain APS) (Acyrthosiphon pisum symbiotic bacterium).